The sequence spans 35 residues: UPF0387 membrane protein YohO (35 aa).

A helical membrane pass occupies residues 6 to 26; the sequence is IGVIALFLFMALGGIGGVMLA.

It belongs to the UPF0387 family.

The protein localises to the cell inner membrane. The chain is UPF0387 membrane protein YohO from Shigella boydii serotype 4 (strain Sb227).